Here is a 242-residue protein sequence, read N- to C-terminus: Alpha-aspartyl dipeptidase (242 aa).

Active-site charge relay system residues include Ser125, Asp140, and His162.

The protein belongs to the peptidase S51 family.

It is found in the cytoplasm. It catalyses the reaction Dipeptidase E catalyzes the hydrolysis of dipeptides Asp-|-Xaa. It does not act on peptides with N-terminal Glu, Asn or Gln, nor does it cleave isoaspartyl peptides.. Hydrolyzes dipeptides containing N-terminal aspartate residues. The chain is Alpha-aspartyl dipeptidase (aad-a) from Xenopus laevis (African clawed frog).